A 60-amino-acid polypeptide reads, in one-letter code: Large ribosomal subunit protein bL32 (60 aa).

Over residues 1–23 (MAKHPVPKKKTSKSKRDMRRSHH) the composition is skewed to basic residues. A disordered region spans residues 1–26 (MAKHPVPKKKTSKSKRDMRRSHHALV).

This sequence belongs to the bacterial ribosomal protein bL32 family.

The polypeptide is Large ribosomal subunit protein bL32 (Deinococcus geothermalis (strain DSM 11300 / CIP 105573 / AG-3a)).